A 227-amino-acid chain; its full sequence is Urease accessory protein UreG (227 aa).

Residues M1–D10 show a composition bias toward basic and acidic residues. The disordered stretch occupies residues M1–P22. G35–T42 lines the GTP pocket.

The protein belongs to the SIMIBI class G3E GTPase family. UreG subfamily. In terms of assembly, homodimer. UreD, UreF and UreG form a complex that acts as a GTP-hydrolysis-dependent molecular chaperone, activating the urease apoprotein by helping to assemble the nickel containing metallocenter of UreC. The UreE protein probably delivers the nickel.

It localises to the cytoplasm. Facilitates the functional incorporation of the urease nickel metallocenter. This process requires GTP hydrolysis, probably effectuated by UreG. The sequence is that of Urease accessory protein UreG from Streptomyces avermitilis (strain ATCC 31267 / DSM 46492 / JCM 5070 / NBRC 14893 / NCIMB 12804 / NRRL 8165 / MA-4680).